We begin with the raw amino-acid sequence, 194 residues long: Imidazoleglycerol-phosphate dehydratase (194 aa).

The protein belongs to the imidazoleglycerol-phosphate dehydratase family.

Its subcellular location is the cytoplasm. The catalysed reaction is D-erythro-1-(imidazol-4-yl)glycerol 3-phosphate = 3-(imidazol-4-yl)-2-oxopropyl phosphate + H2O. Its pathway is amino-acid biosynthesis; L-histidine biosynthesis; L-histidine from 5-phospho-alpha-D-ribose 1-diphosphate: step 6/9. This Listeria innocua serovar 6a (strain ATCC BAA-680 / CLIP 11262) protein is Imidazoleglycerol-phosphate dehydratase.